A 146-amino-acid polypeptide reads, in one-letter code: Protein U1 (146 aa).

It belongs to the nanovirus U1 protein family.

This chain is Protein U1 (DNA-U1), found in Subterranean clover stunt virus (strain F) (SCSV).